Consider the following 314-residue polypeptide: Methionyl-tRNA formyltransferase (314 aa).

A (6S)-5,6,7,8-tetrahydrofolate-binding site is contributed by 110-113; that stretch reads SLLP.

Belongs to the Fmt family.

The enzyme catalyses L-methionyl-tRNA(fMet) + (6R)-10-formyltetrahydrofolate = N-formyl-L-methionyl-tRNA(fMet) + (6S)-5,6,7,8-tetrahydrofolate + H(+). Functionally, attaches a formyl group to the free amino group of methionyl-tRNA(fMet). The formyl group appears to play a dual role in the initiator identity of N-formylmethionyl-tRNA by promoting its recognition by IF2 and preventing the misappropriation of this tRNA by the elongation apparatus. The polypeptide is Methionyl-tRNA formyltransferase (Lactobacillus johnsonii (strain CNCM I-12250 / La1 / NCC 533)).